The chain runs to 308 residues: MTSKLEQLKQFTTVVADTGDLDAIARLKPVDATTNPSLLLKAASLPGYADLLKQAVSTGKGDPGLACDHFAVAVGQEILKVIPGRISTEVDARLSFDTGATLLRAERLIGLYEQAGIGRERVLIKIASTWEGIRAAEQLEKSGVQTNLTLLFSFAQAQACADAGVFLISPFVGRIYDWYKKTEGRDFVGSEDPGVQSVSRIYDYYKANGYDTVVMGASFRNLGQIEALAGCDRLTISPELLQKLAEDEGELSRKLAPGGAGEARQTLDESAFRWALNEDAMATEKLAEGIRLFARDQEKLEALLAAKA.

Lys125 (schiff-base intermediate with substrate) is an active-site residue.

This sequence belongs to the transaldolase family. Type 1 subfamily. As to quaternary structure, homodimer.

The protein resides in the cytoplasm. The enzyme catalyses D-sedoheptulose 7-phosphate + D-glyceraldehyde 3-phosphate = D-erythrose 4-phosphate + beta-D-fructose 6-phosphate. It functions in the pathway carbohydrate degradation; pentose phosphate pathway; D-glyceraldehyde 3-phosphate and beta-D-fructose 6-phosphate from D-ribose 5-phosphate and D-xylulose 5-phosphate (non-oxidative stage): step 2/3. Functionally, transaldolase is important for the balance of metabolites in the pentose-phosphate pathway. This is Transaldolase from Ectopseudomonas mendocina (strain ymp) (Pseudomonas mendocina).